Here is a 249-residue protein sequence, read N- to C-terminus: Uridylate kinase (249 aa).

An ATP-binding site is contributed by 22–25 (KISG). The involved in allosteric activation by GTP stretch occupies residues 30–35 (GTQGFG). Position 64 (glycine 64) interacts with UMP. The ATP site is built by glycine 65 and arginine 69. Residues aspartate 84 and 145-152 (TGNPYFTT) each bind UMP. ATP is bound by residues asparagine 173, tyrosine 179, and aspartate 182.

The protein belongs to the UMP kinase family. As to quaternary structure, homohexamer.

It is found in the cytoplasm. The enzyme catalyses UMP + ATP = UDP + ADP. It participates in pyrimidine metabolism; CTP biosynthesis via de novo pathway; UDP from UMP (UMPK route): step 1/1. Allosterically activated by GTP. Inhibited by UTP. Its function is as follows. Catalyzes the reversible phosphorylation of UMP to UDP. This is Uridylate kinase from Ruegeria sp. (strain TM1040) (Silicibacter sp.).